The following is a 411-amino-acid chain: Common plant regulatory factor 1 (411 aa).

Residues 1 to 14 (MGNTDDVKAVKPEK) show a composition bias toward basic and acidic residues. Disordered stretches follow at residues 1 to 30 (MGNTDDVKAVKPEKLSSPPPPAAPDQSNSH), 130 to 197 (AMSI…SSVI), and 232 to 293 (SSLE…KQAE). A compositionally biased stretch (polar residues) spans 148–164 (TLSQSKETEGSSDGSNE). Residues 235–244 (ELKDSPKEHA) show a composition bias toward basic and acidic residues. The segment covering 249–259 (AGGQQPSTMMP) has biased composition (polar residues). Positions 264 to 293 (LHNDRDLKRERRKQSNRESARRSRLRKQAE) are enriched in basic and acidic residues. The bZIP domain occupies 269 to 332 (DLKRERRKQS…EKLTNDNSRL (64 aa)). The basic motif stretch occupies residues 271–290 (KRERRKQSNRESARRSRLRK). Positions 297–332 (LAIKVDSLTAENMALKAEINRLTLTAEKLTNDNSRL) are leucine-zipper. Residues 346 to 411 (DVGLGNNNEK…NPRTDAVAAG (66 aa)) form a disordered region.

The protein belongs to the bZIP family. As to quaternary structure, binds DNA as a dimer.

Its subcellular location is the nucleus. Binds to the G-box-like motif (5'-ACGTGGC-3') of the chalcone synthase (CHS) gene promoter. G-box and G-box-like motifs are defined in promoters of certain plant genes which are regulated by such diverse stimuli as light-induction or hormone control. This chain is Common plant regulatory factor 1 (CPRF1), found in Petroselinum crispum (Parsley).